The chain runs to 209 residues: Holliday junction branch migration complex subunit RuvA (209 aa).

Residues 1 to 70 (MFSYLKGEAI…EDGTYLYGFA (70 aa)) form a domain I region. Residues 71 to 149 (SAAARDLFRQ…QWRDQFSLPD (79 aa)) form a domain II region. The tract at residues 149–153 (DTAAQ) is flexible linker. The domain III stretch occupies residues 154-209 (PNAAVHEDLELTLLALGYQETEIRGAIATLSQDSILLQNDNADEWIRRAITLLSQT).

It belongs to the RuvA family. As to quaternary structure, homotetramer. Forms an RuvA(8)-RuvB(12)-Holliday junction (HJ) complex. HJ DNA is sandwiched between 2 RuvA tetramers; dsDNA enters through RuvA and exits via RuvB. An RuvB hexamer assembles on each DNA strand where it exits the tetramer. Each RuvB hexamer is contacted by two RuvA subunits (via domain III) on 2 adjacent RuvB subunits; this complex drives branch migration. In the full resolvosome a probable DNA-RuvA(4)-RuvB(12)-RuvC(2) complex forms which resolves the HJ.

The protein localises to the cytoplasm. Functionally, the RuvA-RuvB-RuvC complex processes Holliday junction (HJ) DNA during genetic recombination and DNA repair, while the RuvA-RuvB complex plays an important role in the rescue of blocked DNA replication forks via replication fork reversal (RFR). RuvA specifically binds to HJ cruciform DNA, conferring on it an open structure. The RuvB hexamer acts as an ATP-dependent pump, pulling dsDNA into and through the RuvAB complex. HJ branch migration allows RuvC to scan DNA until it finds its consensus sequence, where it cleaves and resolves the cruciform DNA. This Picosynechococcus sp. (strain ATCC 27264 / PCC 7002 / PR-6) (Agmenellum quadruplicatum) protein is Holliday junction branch migration complex subunit RuvA.